The chain runs to 499 residues: Protein NODULATION SIGNALING PATHWAY 2 (499 aa).

The interval N64–A106 is disordered. Residues T88–E104 are compositionally biased toward low complexity. The GRAS domain maps to A106 to T491. The interval L113–K182 is leucine repeat I (LRI). Residues F201–A265 are VHIID. A VHIID motif is present at residues V232–D236. The tract at residues E281–A313 is leucine repeat II (LRII). Residues L323 to G414 form a PFYRE region. The tract at residues A417–T491 is SAW.

This sequence belongs to the GRAS family. In terms of assembly, interacts with IPN2. Binds to RAD1. Interacts with RAM1. Highly expressed in roots.

Its subcellular location is the nucleus membrane. It is found in the endoplasmic reticulum. Transcriptional regulator essential for Nod-factor-induced gene expression. Acts downstream of calcium spiking and a calcium/calmodulin-dependent protein kinase required for activation of early nodulation gene expression. Transcription factor involved in the induction of NIN and ENOD40 genes, which are required for rhizobial infection and early nodule development. Does not seem to contribute to the early steps of the arbuscular mycorrhizal fungus infection and colonization processes in roots. Transcription factor involved in the positive regulation of the beta-carotene isomerase D27, which participates in a pathway leading to biosynthesis of strigolactones in roots. The sequence is that of Protein NODULATION SIGNALING PATHWAY 2 from Lotus japonicus (Lotus corniculatus var. japonicus).